The following is a 246-amino-acid chain: Eukaryotic translation initiation factor 6 (246 aa).

This sequence belongs to the eIF-6 family. In terms of assembly, monomer. Associates with the 60S ribosomal subunit.

It is found in the cytoplasm. The protein localises to the nucleus. Its subcellular location is the nucleolus. Binds to the 60S ribosomal subunit and prevents its association with the 40S ribosomal subunit to form the 80S initiation complex in the cytoplasm. May also be involved in ribosome biogenesis. Involved in miRNA-mediated gene silencing. The sequence is that of Eukaryotic translation initiation factor 6 from Caenorhabditis elegans.